A 485-amino-acid chain; its full sequence is Glutamyl-tRNA(Gln) amidotransferase subunit A (485 aa).

Catalysis depends on charge relay system residues Lys-78 and Ser-153. Ser-177 serves as the catalytic Acyl-ester intermediate.

Belongs to the amidase family. GatA subfamily. Heterotrimer of A, B and C subunits.

It carries out the reaction L-glutamyl-tRNA(Gln) + L-glutamine + ATP + H2O = L-glutaminyl-tRNA(Gln) + L-glutamate + ADP + phosphate + H(+). Functionally, allows the formation of correctly charged Gln-tRNA(Gln) through the transamidation of misacylated Glu-tRNA(Gln) in organisms which lack glutaminyl-tRNA synthetase. The reaction takes place in the presence of glutamine and ATP through an activated gamma-phospho-Glu-tRNA(Gln). This chain is Glutamyl-tRNA(Gln) amidotransferase subunit A, found in Trichlorobacter lovleyi (strain ATCC BAA-1151 / DSM 17278 / SZ) (Geobacter lovleyi).